A 156-amino-acid polypeptide reads, in one-letter code: RNA pyrophosphohydrolase (156 aa).

Residues 6–148 (NYRPNVAAIV…KKNIYVKVIK (143 aa)) form the Nudix hydrolase domain. The Nudix box motif lies at 43–64 (GGIDKGESAKNALFRELKEEIG).

This sequence belongs to the Nudix hydrolase family. RppH subfamily. A divalent metal cation serves as cofactor.

Functionally, accelerates the degradation of transcripts by removing pyrophosphate from the 5'-end of triphosphorylated RNA, leading to a more labile monophosphorylated state that can stimulate subsequent ribonuclease cleavage. This is RNA pyrophosphohydrolase from Campylobacter jejuni subsp. doylei (strain ATCC BAA-1458 / RM4099 / 269.97).